We begin with the raw amino-acid sequence, 210 residues long: Small ribosomal subunit protein uS3 (210 aa).

Residues 38 to 106 enclose the KH type-2 domain; the sequence is IRQFLKKRLY…EVFININEVR (69 aa).

Belongs to the universal ribosomal protein uS3 family. Part of the 30S ribosomal subunit. Forms a tight complex with proteins S10 and S14.

Its function is as follows. Binds the lower part of the 30S subunit head. Binds mRNA in the 70S ribosome, positioning it for translation. In Trichlorobacter lovleyi (strain ATCC BAA-1151 / DSM 17278 / SZ) (Geobacter lovleyi), this protein is Small ribosomal subunit protein uS3.